Here is a 152-residue protein sequence, read N- to C-terminus: MAPSRKNKVAKEEVQVSLGPQVRDGEVVFGVAHIYASFNDTFVHVTDLSGKETISRVTGGMKVKADRDEASPYAAMLAAQDVAEKCKSLGITALHIKLRATGGNRTKTPGPGAQSALRALARSSMKIGRIEDVTPIPSDSTRRKGGRRGRRL.

Residues 131–152 form a disordered region; the sequence is EDVTPIPSDSTRRKGGRRGRRL. Residues 143 to 152 show a composition bias toward basic residues; it reads RKGGRRGRRL.

Belongs to the universal ribosomal protein uS11 family.

In Anopheles gambiae (African malaria mosquito), this protein is Small ribosomal subunit protein uS11B.